Here is a 115-residue protein sequence, read N- to C-terminus: NADH-ubiquinone oxidoreductase chain 3 (115 aa).

Transmembrane regions (helical) follow at residues 4–24, 55–75, and 84–104; these read IVIL…AFWL, FFLI…LLPL, and TYFT…GLMY.

This sequence belongs to the complex I subunit 3 family. As to quaternary structure, core subunit of respiratory chain NADH dehydrogenase (Complex I) which is composed of 45 different subunits. Interacts with TMEM186. Interacts with TMEM242.

Its subcellular location is the mitochondrion inner membrane. It carries out the reaction a ubiquinone + NADH + 5 H(+)(in) = a ubiquinol + NAD(+) + 4 H(+)(out). Its function is as follows. Core subunit of the mitochondrial membrane respiratory chain NADH dehydrogenase (Complex I) which catalyzes electron transfer from NADH through the respiratory chain, using ubiquinone as an electron acceptor. Essential for the catalytic activity of complex I. The chain is NADH-ubiquinone oxidoreductase chain 3 from Eligmodontia typus (Highland gerbil mouse).